An 834-amino-acid chain; its full sequence is Leucine--tRNA ligase (834 aa).

The 'HIGH' region signature appears at 40-50 (PYPSGNIHMGH). The 'KMSKS' region motif lies at 586–590 (KMSKS). Lysine 589 contributes to the ATP binding site.

Belongs to the class-I aminoacyl-tRNA synthetase family.

Its subcellular location is the cytoplasm. The enzyme catalyses tRNA(Leu) + L-leucine + ATP = L-leucyl-tRNA(Leu) + AMP + diphosphate. The polypeptide is Leucine--tRNA ligase (Nitratidesulfovibrio vulgaris (strain DSM 19637 / Miyazaki F) (Desulfovibrio vulgaris)).